A 417-amino-acid polypeptide reads, in one-letter code: Gamma-glutamyl phosphate reductase (417 aa).

Belongs to the gamma-glutamyl phosphate reductase family.

It localises to the cytoplasm. The catalysed reaction is L-glutamate 5-semialdehyde + phosphate + NADP(+) = L-glutamyl 5-phosphate + NADPH + H(+). Its pathway is amino-acid biosynthesis; L-proline biosynthesis; L-glutamate 5-semialdehyde from L-glutamate: step 2/2. Its function is as follows. Catalyzes the NADPH-dependent reduction of L-glutamate 5-phosphate into L-glutamate 5-semialdehyde and phosphate. The product spontaneously undergoes cyclization to form 1-pyrroline-5-carboxylate. This chain is Gamma-glutamyl phosphate reductase, found in Streptococcus agalactiae serotype III (strain NEM316).